The primary structure comprises 1255 residues: DNA-directed RNA polymerase subunit beta' (1255 aa).

Positions 68, 70, 83, and 86 each coordinate Zn(2+). The Mg(2+) site is built by aspartate 457, aspartate 459, and aspartate 461. 4 residues coordinate Zn(2+): cysteine 803, cysteine 885, cysteine 892, and cysteine 895. The segment covering 1220–1240 (NSDEEVSFTEDEYFEDEENDL) has biased composition (acidic residues). Positions 1220–1255 (NSDEEVSFTEDEYFEDEENDLSTENFDDLKFSEEEE) are disordered. Positions 1246–1255 (DDLKFSEEEE) are enriched in basic and acidic residues.

Belongs to the RNA polymerase beta' chain family. As to quaternary structure, the RNAP catalytic core consists of 2 alpha, 1 beta, 1 beta' and 1 omega subunit. When a sigma factor is associated with the core the holoenzyme is formed, which can initiate transcription. The cofactor is Mg(2+). Zn(2+) is required as a cofactor.

The enzyme catalyses RNA(n) + a ribonucleoside 5'-triphosphate = RNA(n+1) + diphosphate. Functionally, DNA-dependent RNA polymerase catalyzes the transcription of DNA into RNA using the four ribonucleoside triphosphates as substrates. This chain is DNA-directed RNA polymerase subunit beta', found in Lachnoclostridium phytofermentans (strain ATCC 700394 / DSM 18823 / ISDg) (Clostridium phytofermentans).